The following is a 403-amino-acid chain: Dual-specificity RNA methyltransferase RlmN (403 aa).

E121 (proton acceptor) is an active-site residue. The 249-residue stretch at 127–375 folds into the Radical SAM core domain; that stretch reads ETDRGTLCVS…VRTPRGRDIL (249 aa). Residues C134 and C378 are joined by a disulfide bond. Residues C141, C145, and C148 each coordinate [4Fe-4S] cluster. Residues 204-205, S236, 258-260, and N335 each bind S-adenosyl-L-methionine; these read GE and SLH. C378 acts as the S-methylcysteine intermediate in catalysis.

Belongs to the radical SAM superfamily. RlmN family. The cofactor is [4Fe-4S] cluster.

It is found in the cytoplasm. The catalysed reaction is adenosine(2503) in 23S rRNA + 2 reduced [2Fe-2S]-[ferredoxin] + 2 S-adenosyl-L-methionine = 2-methyladenosine(2503) in 23S rRNA + 5'-deoxyadenosine + L-methionine + 2 oxidized [2Fe-2S]-[ferredoxin] + S-adenosyl-L-homocysteine. The enzyme catalyses adenosine(37) in tRNA + 2 reduced [2Fe-2S]-[ferredoxin] + 2 S-adenosyl-L-methionine = 2-methyladenosine(37) in tRNA + 5'-deoxyadenosine + L-methionine + 2 oxidized [2Fe-2S]-[ferredoxin] + S-adenosyl-L-homocysteine. In terms of biological role, specifically methylates position 2 of adenine 2503 in 23S rRNA and position 2 of adenine 37 in tRNAs. m2A2503 modification seems to play a crucial role in the proofreading step occurring at the peptidyl transferase center and thus would serve to optimize ribosomal fidelity. This is Dual-specificity RNA methyltransferase RlmN from Rhodopseudomonas palustris (strain BisA53).